The chain runs to 266 residues: Putative carbamate hydrolase RutD (266 aa).

It belongs to the AB hydrolase superfamily. Hydrolase RutD family.

The catalysed reaction is carbamate + 2 H(+) = NH4(+) + CO2. Its function is as follows. Involved in pyrimidine catabolism. May facilitate the hydrolysis of carbamate, a reaction that can also occur spontaneously. This chain is Putative carbamate hydrolase RutD, found in Acinetobacter baylyi (strain ATCC 33305 / BD413 / ADP1).